Here is a 240-residue protein sequence, read N- to C-terminus: Biosynthetic peptidoglycan transglycosylase (240 aa).

The helical transmembrane segment at 9 to 31 (FLNVVKWFAIASVLLVLLFRVVP) threads the bilayer.

It belongs to the glycosyltransferase 51 family.

It localises to the cell inner membrane. The catalysed reaction is [GlcNAc-(1-&gt;4)-Mur2Ac(oyl-L-Ala-gamma-D-Glu-L-Lys-D-Ala-D-Ala)](n)-di-trans,octa-cis-undecaprenyl diphosphate + beta-D-GlcNAc-(1-&gt;4)-Mur2Ac(oyl-L-Ala-gamma-D-Glu-L-Lys-D-Ala-D-Ala)-di-trans,octa-cis-undecaprenyl diphosphate = [GlcNAc-(1-&gt;4)-Mur2Ac(oyl-L-Ala-gamma-D-Glu-L-Lys-D-Ala-D-Ala)](n+1)-di-trans,octa-cis-undecaprenyl diphosphate + di-trans,octa-cis-undecaprenyl diphosphate + H(+). The protein operates within cell wall biogenesis; peptidoglycan biosynthesis. Peptidoglycan polymerase that catalyzes glycan chain elongation from lipid-linked precursors. This is Biosynthetic peptidoglycan transglycosylase from Pseudomonas fluorescens (strain SBW25).